The chain runs to 145 residues: Ribonuclease H (145 aa).

Positions 1-141 (MQEVTIYSDG…ADALANRGVA (141 aa)) constitute an RNase H type-1 domain. Residues Asp9, Glu47, Asp69, and Asp133 each coordinate Mg(2+).

Belongs to the RNase H family. In terms of assembly, monomer. It depends on Mg(2+) as a cofactor.

It is found in the cytoplasm. The enzyme catalyses Endonucleolytic cleavage to 5'-phosphomonoester.. Endonuclease that specifically degrades the RNA of RNA-DNA hybrids. This chain is Ribonuclease H, found in Cupriavidus metallidurans (strain ATCC 43123 / DSM 2839 / NBRC 102507 / CH34) (Ralstonia metallidurans).